Here is a 73-residue protein sequence, read N- to C-terminus: Large ribosomal subunit protein bL31 (73 aa).

Positions 34–43 (KMNLDIDPKS) are enriched in basic and acidic residues. Positions 34–54 (KMNLDIDPKSHPAWTGGTQQM) are disordered.

Belongs to the bacterial ribosomal protein bL31 family. Type A subfamily. In terms of assembly, part of the 50S ribosomal subunit.

Binds the 23S rRNA. The chain is Large ribosomal subunit protein bL31 from Rhodopseudomonas palustris (strain BisA53).